Consider the following 655-residue polypeptide: Broad substrate specificity ATP-binding cassette transporter ABCG2 (655 aa).

Residues Met-1–Ser-395 lie on the Cytoplasmic side of the membrane. In terms of domain architecture, ABC transporter spans Leu-37–Ala-286. ATP-binding positions include Gly-80 to Ser-87, Arg-184 to Glu-190, Glu-211, and His-243. The residue at position 362 (Thr-362) is a Phosphothreonine; by PIM1. The ABC transmembrane type-2 domain occupies Leu-389–Leu-651. The helical transmembrane segment at Ile-396–Leu-416 threads the bilayer. At Lys-417–Gly-428 the chain is on the extracellular side. The helical transmembrane segment at Val-429–Val-449 threads the bilayer. Over Val-450–Asp-477 the chain is Cytoplasmic. Residues Leu-478 to Gly-498 traverse the membrane as a helical segment. Topologically, residues Leu-499–Phe-506 are extracellular. The helical transmembrane segment at Phe-507 to Ile-527 threads the bilayer. The Cytoplasmic portion of the chain corresponds to Ala-528–Ser-535. The chain crosses the membrane as a helical span at residues Val-536 to Val-556. The Extracellular segment spans residues Asn-557–His-630. An intrachain disulfide couples Cys-592 to Cys-608. N-linked (GlcNAc...) asparagine glycosylation occurs at Asn-596. A helical transmembrane segment spans residues Val-631 to Leu-651. Residues Lys-652 to Ser-655 are Cytoplasmic-facing.

This sequence belongs to the ABC transporter superfamily. ABCG family. Eye pigment precursor importer (TC 3.A.1.204) subfamily. Homodimer; disulfide-linked. The minimal functional unit is a homodimer, but the major oligomeric form in plasma membrane is a homotetramer with possibility of higher order oligomerization up to homododecamers. In terms of processing, N-glycosylated. Glycosylation-deficient ABCG2 is normally expressed and functional. Phosphorylated. Phosphorylation at Thr-362 by PIM1 is induced by drugs like mitoxantrone and is associated with cells increased drug resistance. It regulates the localization to the plasma membrane, the homooligomerization and therefore, the activity of the transporter. As to expression, highly expressed in placenta. Low expression in small intestine, liver and colon. Expressed in brain (at protein level).

It localises to the cell membrane. The protein resides in the apical cell membrane. The protein localises to the mitochondrion membrane. It catalyses the reaction ATP + H2O + xenobioticSide 1 = ADP + phosphate + xenobioticSide 2.. It carries out the reaction urate(in) + ATP + H2O = urate(out) + ADP + phosphate + H(+). The enzyme catalyses indoxyl sulfate(in) + ATP + H2O = indoxyl sulfate(out) + ADP + phosphate + H(+). The catalysed reaction is sphing-4-enine 1-phosphate(in) + ATP + H2O = sphing-4-enine 1-phosphate(out) + ADP + phosphate + H(+). It catalyses the reaction estrone 3-sulfate(in) + ATP + H2O = estrone 3-sulfate(out) + ADP + phosphate + H(+). It carries out the reaction dehydroepiandrosterone 3-sulfate(in) + ATP + H2O = dehydroepiandrosterone 3-sulfate(out) + ADP + phosphate + H(+). The enzyme catalyses 4-methylumbelliferone sulfate(in) + ATP + H2O = 4-methylumbelliferone sulfate(out) + ADP + phosphate + H(+). The catalysed reaction is 5,7-dimethyl-2-methylamino-4-(3-pyridylmethyl)-1,3-benzothiazol-6-yl beta-D-glucuronate(in) + ATP + H2O = 5,7-dimethyl-2-methylamino-4-(3-pyridylmethyl)-1,3-benzothiazol-6-yl beta-D-glucuronate(out) + ADP + phosphate + H(+). It catalyses the reaction 4-methylumbelliferone beta-D-glucuronate(in) + ATP + H2O = 4-methylumbelliferone beta-D-glucuronate(out) + ADP + phosphate + H(+). It carries out the reaction 5,7-dimethyl-2-methylamino-4-(3-pyridylmethyl)-1,3-benzothiazol-6-yl sulfate(in) + ATP + H2O = 5,7-dimethyl-2-methylamino-4-(3-pyridylmethyl)-1,3-benzothiazol-6-yl sulfate(out) + ADP + phosphate + H(+). The enzyme catalyses 17beta-estradiol 17-O-(beta-D-glucuronate)(in) + ATP + H2O = 17beta-estradiol 17-O-(beta-D-glucuronate)(out) + ADP + phosphate + H(+). The catalysed reaction is methotrexate(in) + ATP + H2O = methotrexate(out) + ADP + phosphate + H(+). It catalyses the reaction riboflavin(in) + ATP + H2O = riboflavin(out) + ADP + phosphate + H(+). It carries out the reaction pheophorbide a(in) + ATP + H2O = pheophorbide a(out) + ADP + phosphate + H(+). The enzyme catalyses itaconate(in) + ATP + H2O = itaconate(out) + ADP + phosphate + H(+). With respect to regulation, specifically inhibited by the fungal toxin fumitremorgin C and Ko143. Its function is as follows. Broad substrate specificity ATP-dependent transporter of the ATP-binding cassette (ABC) family that actively extrudes a wide variety of physiological compounds, dietary toxins and xenobiotics from cells. Involved in porphyrin homeostasis, mediating the export of protoporphyrin IX (PPIX) from both mitochondria to cytosol and cytosol to extracellular space, it also functions in the cellular export of heme. Also mediates the efflux of sphingosine-1-P from cells. Acts as a urate exporter functioning in both renal and extrarenal urate excretion. In kidney, it also functions as a physiological exporter of the uremic toxin indoxyl sulfate. Also involved in the excretion of steroids like estrone 3-sulfate/E1S, 3beta-sulfooxy-androst-5-en-17-one/DHEAS, and other sulfate conjugates. Mediates the secretion of the riboflavin and biotin vitamins into milk. Extrudes pheophorbide a, a phototoxic porphyrin catabolite of chlorophyll, reducing its bioavailability. Plays an important role in the exclusion of xenobiotics from the brain. It confers to cells a resistance to multiple drugs and other xenobiotics including mitoxantrone, pheophorbide, camptothecin, methotrexate, azidothymidine, and the anthracyclines daunorubicin and doxorubicin, through the control of their efflux. In placenta, it limits the penetration of drugs from the maternal plasma into the fetus. May play a role in early stem cell self-renewal by blocking differentiation. In inflammatory macrophages, exports itaconate from the cytosol to the extracellular compartment and limits the activation of TFEB-dependent lysosome biogenesis involved in antibacterial innate immune response. This is Broad substrate specificity ATP-binding cassette transporter ABCG2 (ABCG2) from Homo sapiens (Human).